We begin with the raw amino-acid sequence, 230 residues long: UPF0500 protein C1orf216 homolog (230 aa).

The disordered stretch occupies residues 1 to 103 (MFAAIQPGLA…AEPEKLSGAS (103 aa)). The segment covering 60–73 (RSSSESPSDNQVFQ) has biased composition (polar residues). The span at 85–94 (PPEGAEIPGA) shows a compositional bias: low complexity.

Belongs to the UPF0500 family.

In Mus musculus (Mouse), this protein is UPF0500 protein C1orf216 homolog.